Reading from the N-terminus, the 253-residue chain is Ubiquinone biosynthesis O-methyltransferase (253 aa).

The S-adenosyl-L-methionine site is built by Arg-47, Gly-78, Asp-99, and Met-141.

The protein belongs to the methyltransferase superfamily. UbiG/COQ3 family.

The catalysed reaction is a 3-demethylubiquinol + S-adenosyl-L-methionine = a ubiquinol + S-adenosyl-L-homocysteine + H(+). The enzyme catalyses a 3-(all-trans-polyprenyl)benzene-1,2-diol + S-adenosyl-L-methionine = a 2-methoxy-6-(all-trans-polyprenyl)phenol + S-adenosyl-L-homocysteine + H(+). It participates in cofactor biosynthesis; ubiquinone biosynthesis. O-methyltransferase that catalyzes the 2 O-methylation steps in the ubiquinone biosynthetic pathway. This is Ubiquinone biosynthesis O-methyltransferase from Bradyrhizobium diazoefficiens (strain JCM 10833 / BCRC 13528 / IAM 13628 / NBRC 14792 / USDA 110).